A 161-amino-acid polypeptide reads, in one-letter code: Phosphopantetheine adenylyltransferase (161 aa).

Residue Ser-8 participates in substrate binding. ATP is bound by residues 8-9 and His-16; that span reads SF. Substrate is bound by residues 36 to 40, Leu-72, and Arg-86; that span reads ENPRK. ATP contacts are provided by residues 87-89, Glu-97, and 122-128; these read GLR and FSFISSS. Substrate is bound at residue Glu-132.

It belongs to the bacterial CoaD family. In terms of assembly, homohexamer. It depends on Mg(2+) as a cofactor.

The protein localises to the cytoplasm. It carries out the reaction (R)-4'-phosphopantetheine + ATP + H(+) = 3'-dephospho-CoA + diphosphate. It participates in cofactor biosynthesis; coenzyme A biosynthesis; CoA from (R)-pantothenate: step 4/5. Functionally, reversibly transfers an adenylyl group from ATP to 4'-phosphopantetheine, yielding dephospho-CoA (dPCoA) and pyrophosphate. This chain is Phosphopantetheine adenylyltransferase, found in Thermotoga maritima (strain ATCC 43589 / DSM 3109 / JCM 10099 / NBRC 100826 / MSB8).